A 283-amino-acid chain; its full sequence is Bifunctional protein FolD (283 aa).

NADP(+) is bound by residues 164–166 (GRS), Ser189, and Ile230.

It belongs to the tetrahydrofolate dehydrogenase/cyclohydrolase family. As to quaternary structure, homodimer.

The enzyme catalyses (6R)-5,10-methylene-5,6,7,8-tetrahydrofolate + NADP(+) = (6R)-5,10-methenyltetrahydrofolate + NADPH. It carries out the reaction (6R)-5,10-methenyltetrahydrofolate + H2O = (6R)-10-formyltetrahydrofolate + H(+). It participates in one-carbon metabolism; tetrahydrofolate interconversion. Catalyzes the oxidation of 5,10-methylenetetrahydrofolate to 5,10-methenyltetrahydrofolate and then the hydrolysis of 5,10-methenyltetrahydrofolate to 10-formyltetrahydrofolate. This Lacticaseibacillus paracasei (strain ATCC 334 / BCRC 17002 / CCUG 31169 / CIP 107868 / KCTC 3260 / NRRL B-441) (Lactobacillus paracasei) protein is Bifunctional protein FolD.